The sequence spans 323 residues: Fructose-1,6-bisphosphatase class 1 (323 aa).

Positions 84, 103, 105, and 106 each coordinate Mg(2+). Substrate is bound by residues 106–109 (DGSS), Asn198, and Lys264. Residue Glu270 participates in Mg(2+) binding.

This sequence belongs to the FBPase class 1 family. As to quaternary structure, homotetramer. Mg(2+) serves as cofactor.

It is found in the cytoplasm. It carries out the reaction beta-D-fructose 1,6-bisphosphate + H2O = beta-D-fructose 6-phosphate + phosphate. Its pathway is carbohydrate biosynthesis; gluconeogenesis. The polypeptide is Fructose-1,6-bisphosphatase class 1 (Cellvibrio japonicus (strain Ueda107) (Pseudomonas fluorescens subsp. cellulosa)).